Consider the following 611-residue polypeptide: Leukotriene A-4 hydrolase (611 aa).

Lys73 is modified (N6-acetyllysine). Residues 135–137 (QCQ) and 267–272 (PYGGME) each bind a peptide. His296 provides a ligand contact to Zn(2+). Residue Glu297 is the Proton acceptor of the active site. The Zn(2+) site is built by His300 and Glu319. Residue Lys337 is modified to N6-acetyllysine. The active-site Proton donor is Tyr384. Position 414 is an N6-acetyllysine (Lys414). Ser416 carries the post-translational modification Phosphoserine. Residue 564–566 (RMK) participates in a peptide binding. Lys573 carries the N6-acetyllysine modification.

This sequence belongs to the peptidase M1 family. As to quaternary structure, monomer. Zn(2+) is required as a cofactor. Post-translationally, phosphorylation at Ser-416 inhibits leukotriene-A4 hydrolase activity.

Its subcellular location is the cytoplasm. The catalysed reaction is leukotriene A4 + H2O = leukotriene B4. It catalyses the reaction (5S,6S)-epoxy-(18R)-hydroxy-(7E,9E,11Z,14Z,16E)-eicosapentaenoate + H2O = resolvin E1. The enzyme catalyses (5S,6S)-epoxy-(18S)-hydroxy-(7E,9E,11Z,14Z,16E)-eicosapentaenoate + H2O = 18S-resolvin E1. It carries out the reaction Release of the N-terminal residue from a tripeptide.. Its pathway is lipid metabolism; leukotriene B4 biosynthesis. Inhibited by bestatin. Inhibited by captopril. The epoxide hydrolase activity is restrained by suicide inactivation that involves binding of LTA4 to Tyr-379. 4-(4-benzylphenyl)thiazol-2-amine (ARM1) selectively inhibits the epoxide hydrolase activity. Its function is as follows. Bifunctional zinc metalloenzyme that comprises both epoxide hydrolase (EH) and aminopeptidase activities. Acts as an epoxide hydrolase to catalyze the conversion of LTA4 to the pro-inflammatory mediator leukotriene B4 (LTB4). Also has aminopeptidase activity, with high affinity for N-terminal arginines of various synthetic tripeptides. In addition to its pro-inflammatory EH activity, may also counteract inflammation by its aminopeptidase activity, which inactivates by cleavage another neutrophil attractant, the tripeptide Pro-Gly-Pro (PGP), a bioactive fragment of collagen generated by the action of matrix metalloproteinase-9 (MMP9) and prolylendopeptidase (PREPL). Involved also in the biosynthesis of resolvin E1 and 18S-resolvin E1 from eicosapentaenoic acid, two lipid mediators that show potent anti-inflammatory and pro-resolving actions. The sequence is that of Leukotriene A-4 hydrolase (Lta4h) from Rattus norvegicus (Rat).